The primary structure comprises 151 residues: GTP-dependent dephospho-CoA kinase (151 aa).

Residues Asp-30, Val-31, Asp-49, Lys-51, and Glu-104 each contribute to the GTP site.

This sequence belongs to the GTP-dependent DPCK family.

The enzyme catalyses 3'-dephospho-CoA + GTP = GDP + CoA + H(+). It participates in cofactor biosynthesis; coenzyme A biosynthesis. Functionally, catalyzes the GTP-dependent phosphorylation of the 3'-hydroxyl group of dephosphocoenzyme A to form coenzyme A (CoA). This chain is GTP-dependent dephospho-CoA kinase, found in Cenarchaeum symbiosum (strain A).